The sequence spans 238 residues: Protein Iojap, chloroplastic (238 aa).

The N-terminal 66 residues, 1–66 (MASSTGLTVA…KILTSLSNSR (66 aa)), are a transit peptide targeting the chloroplast.

It belongs to the Iojap/RsfS family. As to quaternary structure, interacts with chloroplast ribosomal protein uL14c (rpl14).

Its subcellular location is the plastid. It localises to the chloroplast. In terms of biological role, may be a ribosome silencing factor (Potential). Involved in plastid biogenesis. This chain is Protein Iojap, chloroplastic (IJ), found in Arabidopsis thaliana (Mouse-ear cress).